Consider the following 388-residue polypeptide: Glutamate 5-kinase (388 aa).

Residue Lys21 participates in ATP binding. The substrate site is built by Ser61, Asp148, and Asn160. Residues 180 to 181 (TD) and 222 to 228 (TGGMITK) each bind ATP. The 79-residue stretch at 285–363 (RGSVFLDPGA…RWLARELGAE (79 aa)) folds into the PUA domain.

The protein belongs to the glutamate 5-kinase family.

The protein localises to the cytoplasm. The enzyme catalyses L-glutamate + ATP = L-glutamyl 5-phosphate + ADP. The protein operates within amino-acid biosynthesis; L-proline biosynthesis; L-glutamate 5-semialdehyde from L-glutamate: step 1/2. Functionally, catalyzes the transfer of a phosphate group to glutamate to form L-glutamate 5-phosphate. The chain is Glutamate 5-kinase from Thermobifida fusca (strain YX).